The chain runs to 423 residues: F-box protein At1g52495 (423 aa).

Residues 49–95 (KLKDVHLPLDLIVEILKKLPTKSLMRFRCVSKPWSFIISKRRDFVES) form the F-box domain.

The sequence is that of F-box protein At1g52495 from Arabidopsis thaliana (Mouse-ear cress).